A 495-amino-acid polypeptide reads, in one-letter code: Bifunctional protein GlmU (495 aa).

Residues 1–241 (MTFPGDTAVL…SALVAGVNNR (241 aa)) form a pyrophosphorylase region. Residues 12 to 15 (LAAG), lysine 26, glutamine 83, 88 to 89 (GT), 112 to 114 (SGD), glycine 151, glutamate 166, asparagine 181, and asparagine 239 contribute to the UDP-N-acetyl-alpha-D-glucosamine site. Position 114 (aspartate 114) interacts with Mg(2+). Mg(2+) is bound at residue asparagine 239. Residues 242–262 (VQLAELASELNRRVVAAHQLA) are linker. The tract at residues 263–495 (GVTVVDPATT…TQPPDADQTP (233 aa)) is N-acetyltransferase. 2 residues coordinate UDP-N-acetyl-alpha-D-glucosamine: arginine 344 and lysine 362. The active-site Proton acceptor is the histidine 374. UDP-N-acetyl-alpha-D-glucosamine-binding residues include tyrosine 377 and asparagine 388. Acetyl-CoA-binding positions include alanine 391, 397-398 (NY), serine 416, and alanine 434. The tract at residues 457–495 (IENWVQRKRPGSPAAQASKRASEMACQQPTQPPDADQTP) is disordered. A compositionally biased stretch (low complexity) spans 483 to 495 (QQPTQPPDADQTP).

It in the N-terminal section; belongs to the N-acetylglucosamine-1-phosphate uridyltransferase family. The protein in the C-terminal section; belongs to the transferase hexapeptide repeat family. In terms of assembly, homotrimer. It depends on Mg(2+) as a cofactor.

It is found in the cytoplasm. The catalysed reaction is alpha-D-glucosamine 1-phosphate + acetyl-CoA = N-acetyl-alpha-D-glucosamine 1-phosphate + CoA + H(+). The enzyme catalyses N-acetyl-alpha-D-glucosamine 1-phosphate + UTP + H(+) = UDP-N-acetyl-alpha-D-glucosamine + diphosphate. It participates in nucleotide-sugar biosynthesis; UDP-N-acetyl-alpha-D-glucosamine biosynthesis; N-acetyl-alpha-D-glucosamine 1-phosphate from alpha-D-glucosamine 6-phosphate (route II): step 2/2. The protein operates within nucleotide-sugar biosynthesis; UDP-N-acetyl-alpha-D-glucosamine biosynthesis; UDP-N-acetyl-alpha-D-glucosamine from N-acetyl-alpha-D-glucosamine 1-phosphate: step 1/1. Its pathway is bacterial outer membrane biogenesis; LPS lipid A biosynthesis. Catalyzes the last two sequential reactions in the de novo biosynthetic pathway for UDP-N-acetylglucosamine (UDP-GlcNAc). The C-terminal domain catalyzes the transfer of acetyl group from acetyl coenzyme A to glucosamine-1-phosphate (GlcN-1-P) to produce N-acetylglucosamine-1-phosphate (GlcNAc-1-P), which is converted into UDP-GlcNAc by the transfer of uridine 5-monophosphate (from uridine 5-triphosphate), a reaction catalyzed by the N-terminal domain. In Mycobacterium tuberculosis (strain ATCC 25177 / H37Ra), this protein is Bifunctional protein GlmU.